A 302-amino-acid chain; its full sequence is Arginase (302 aa).

Positions 103, 126, 128, and 130 each coordinate Mn(2+). Substrate contacts are provided by residues 128–132 (HGDLN), 139–141 (SGN), and aspartate 180. Positions 229 and 231 each coordinate Mn(2+). Substrate-binding residues include threonine 243 and glutamate 274.

The protein belongs to the arginase family. The cofactor is Mn(2+).

It carries out the reaction L-arginine + H2O = urea + L-ornithine. Its pathway is nitrogen metabolism; urea cycle; L-ornithine and urea from L-arginine: step 1/1. This is Arginase (arg) from Staphylococcus aureus (strain MSSA476).